Consider the following 437-residue polypeptide: 3-phosphoshikimate 1-carboxyvinyltransferase (437 aa).

3 residues coordinate 3-phosphoshikimate: lysine 26, serine 27, and arginine 31. Lysine 26 provides a ligand contact to phosphoenolpyruvate. Phosphoenolpyruvate contacts are provided by glycine 99 and arginine 127. Residues serine 172, glutamine 174, aspartate 320, and lysine 347 each coordinate 3-phosphoshikimate. Glutamine 174 is a phosphoenolpyruvate binding site. The active-site Proton acceptor is aspartate 320. Residues arginine 351 and arginine 392 each coordinate phosphoenolpyruvate.

This sequence belongs to the EPSP synthase family. Monomer.

The protein localises to the cytoplasm. The enzyme catalyses 3-phosphoshikimate + phosphoenolpyruvate = 5-O-(1-carboxyvinyl)-3-phosphoshikimate + phosphate. It functions in the pathway metabolic intermediate biosynthesis; chorismate biosynthesis; chorismate from D-erythrose 4-phosphate and phosphoenolpyruvate: step 6/7. Its function is as follows. Catalyzes the transfer of the enolpyruvyl moiety of phosphoenolpyruvate (PEP) to the 5-hydroxyl of shikimate-3-phosphate (S3P) to produce enolpyruvyl shikimate-3-phosphate and inorganic phosphate. In Methylococcus capsulatus (strain ATCC 33009 / NCIMB 11132 / Bath), this protein is 3-phosphoshikimate 1-carboxyvinyltransferase.